The chain runs to 47 residues: Delta-ctenitoxin-Asp2e (47 aa).

Cystine bridges form between Cys3-Cys17, Cys10-Cys23, Cys14-Cys46, Cys16-Cys31, and Cys25-Cys29.

In terms of tissue distribution, expressed by the venom gland.

It localises to the secreted. Inhibits the inactivation of voltage-gated sodium channels (Nav). The polypeptide is Delta-ctenitoxin-Asp2e (Ancylometes sp. (South American fishing spider)).